We begin with the raw amino-acid sequence, 500 residues long: DNA polymerase processivity factor (500 aa).

A disordered region spans residues 388–500 (VSESDDAAAE…QEPANKRGKR (113 aa)). Over residues 438 to 449 (TLQQSAQPSSPA) the composition is skewed to polar residues.

It belongs to the herpesviridae DNA polymerase processivity factor family. Interacts with the DNA polymerase catalytic subunit UL30. Interacts with the origin-binding protein.

Its subcellular location is the host nucleus. Plays an essential role in viral DNA replication by acting as the polymerase accessory subunit. Associates with the viral polymerase to increase its processivity and forms high-affinity direct interactions with DNA. Facilitates the origin-binding protein UL9 loading onto DNA thus increasing its ability to assemble into a functional complex capable of unwinding duplex DNA. The polypeptide is DNA polymerase processivity factor (UL42) (Amazona oratrix (yellow-headed parrot)).